We begin with the raw amino-acid sequence, 425 residues long: Probable proline--tRNA ligase, mitochondrial (425 aa).

The protein belongs to the class-II aminoacyl-tRNA synthetase family.

It localises to the mitochondrion. It catalyses the reaction tRNA(Pro) + L-proline + ATP = L-prolyl-tRNA(Pro) + AMP + diphosphate. This chain is Probable proline--tRNA ligase, mitochondrial, found in Schizosaccharomyces pombe (strain 972 / ATCC 24843) (Fission yeast).